The sequence spans 363 residues: Dihydroorotate dehydrogenase (quinone) (363 aa).

Residues 62–66 (AGYDK) and Thr86 each bind FMN. Lys66 serves as a coordination point for substrate. A substrate-binding site is contributed by 111-115 (NRLGF). 2 residues coordinate FMN: Asn140 and Asn171. Asn171 is a binding site for substrate. Catalysis depends on Ser174, which acts as the Nucleophile. Asn176 contributes to the substrate binding site. FMN contacts are provided by Lys216 and Ser244. Residue 245–246 (NT) coordinates substrate. FMN is bound by residues Gly267, Gly296, and 317-318 (YS).

This sequence belongs to the dihydroorotate dehydrogenase family. Type 2 subfamily. In terms of assembly, monomer. FMN serves as cofactor.

The protein resides in the cell membrane. The enzyme catalyses (S)-dihydroorotate + a quinone = orotate + a quinol. It participates in pyrimidine metabolism; UMP biosynthesis via de novo pathway; orotate from (S)-dihydroorotate (quinone route): step 1/1. In terms of biological role, catalyzes the conversion of dihydroorotate to orotate with quinone as electron acceptor. The polypeptide is Dihydroorotate dehydrogenase (quinone) (Allorhizobium ampelinum (strain ATCC BAA-846 / DSM 112012 / S4) (Agrobacterium vitis (strain S4))).